Reading from the N-terminus, the 571-residue chain is DDB1- and CUL4-associated factor 11 homolog (571 aa).

The interval Arg51 to Thr75 is disordered. The span at Ser60 to Glu69 shows a compositional bias: acidic residues. 6 WD repeats span residues Arg162–Arg201, Arg266–Thr305, Ala309–Val349, Gly357–Gly396, Gly435–Arg479, and Gly482–Ile521.

It belongs to the WD repeat LEC14B family.

Functionally, involved in regulation of lifespan. Required for dopaminergic CEP neuron degeneration in response to Mn(2+). Inhibits the skn-1-mediated up-regulation of tatn-1. In Caenorhabditis elegans, this protein is DDB1- and CUL4-associated factor 11 homolog.